A 369-amino-acid chain; its full sequence is S-adenosylmethionine:tRNA ribosyltransferase-isomerase (369 aa).

This sequence belongs to the QueA family. In terms of assembly, monomer.

Its subcellular location is the cytoplasm. The catalysed reaction is 7-aminomethyl-7-carbaguanosine(34) in tRNA + S-adenosyl-L-methionine = epoxyqueuosine(34) in tRNA + adenine + L-methionine + 2 H(+). It functions in the pathway tRNA modification; tRNA-queuosine biosynthesis. Transfers and isomerizes the ribose moiety from AdoMet to the 7-aminomethyl group of 7-deazaguanine (preQ1-tRNA) to give epoxyqueuosine (oQ-tRNA). This chain is S-adenosylmethionine:tRNA ribosyltransferase-isomerase, found in Synechococcus sp. (strain CC9311).